A 508-amino-acid polypeptide reads, in one-letter code: GMP synthase [glutamine-hydrolyzing] (508 aa).

Residues 1-189 (MILVLDFGSQ…ALLVCDCEKT (189 aa)) enclose the Glutamine amidotransferase type-1 domain. C78 serves as the catalytic Nucleophile. Catalysis depends on residues H163 and E165. The GMPS ATP-PPase domain occupies 190 to 383 (WGMQHFAQRE…LGISQDFLMR (194 aa)). Position 217 to 223 (217 to 223 (SGGVDST)) interacts with ATP.

As to quaternary structure, homodimer.

It catalyses the reaction XMP + L-glutamine + ATP + H2O = GMP + L-glutamate + AMP + diphosphate + 2 H(+). It functions in the pathway purine metabolism; GMP biosynthesis; GMP from XMP (L-Gln route): step 1/1. Functionally, catalyzes the synthesis of GMP from XMP. The chain is GMP synthase [glutamine-hydrolyzing] from Helicobacter pylori (strain HPAG1).